The sequence spans 347 residues: NADH-ubiquinone oxidoreductase chain 2 (347 aa).

9 consecutive transmembrane segments (helical) span residues P3–S23, H25–M45, S67–L87, N150–L170, I178–P198, M201–F221, L237–L257, N274–M294, and M323–M343.

Belongs to the complex I subunit 2 family. Core subunit of respiratory chain NADH dehydrogenase (Complex I) which is composed of 45 different subunits. Interacts with TMEM242.

The protein resides in the mitochondrion inner membrane. The catalysed reaction is a ubiquinone + NADH + 5 H(+)(in) = a ubiquinol + NAD(+) + 4 H(+)(out). In terms of biological role, core subunit of the mitochondrial membrane respiratory chain NADH dehydrogenase (Complex I) which catalyzes electron transfer from NADH through the respiratory chain, using ubiquinone as an electron acceptor. Essential for the catalytic activity and assembly of complex I. The protein is NADH-ubiquinone oxidoreductase chain 2 of Mustela kathiah (Yellow-bellied weasel).